The chain runs to 89 residues: Large ribosomal subunit protein bL27 (89 aa).

The segment at 1 to 26 (MAQKKAGGSSRNGRDSVGQRRGVKRF) is disordered.

This sequence belongs to the bacterial ribosomal protein bL27 family.

The protein is Large ribosomal subunit protein bL27 of Desulfovibrio desulfuricans (strain ATCC 27774 / DSM 6949 / MB).